The primary structure comprises 197 residues: DnaJ homolog subfamily C member 5 (197 aa).

The region spanning 13–82 is the J domain; sequence GESLYHVLGL…RNIYDKYGSL (70 aa). A disordered region spans residues 153–197; sequence EDLEAQMQSDERDTEGPVLVQPASATETTQLTSDSHASYHTDGFN. Positions 175-197 are enriched in polar residues; that stretch reads ASATETTQLTSDSHASYHTDGFN.

Palmitoylated. Palmitoylation occurs probably in the cysteine-rich domain and regulates DNAJC5 stable membrane attachment.

It is found in the cytoplasm. The protein localises to the cytosol. It localises to the membrane. Its subcellular location is the cytoplasmic vesicle. The protein resides in the secretory vesicle. It is found in the chromaffin granule membrane. The protein localises to the melanosome. It localises to the cell membrane. In terms of biological role, may have an important role in presynaptic function. May be involved in calcium-dependent neurotransmitter release at nerve endings. This is DnaJ homolog subfamily C member 5 from Xenopus laevis (African clawed frog).